Here is a 512-residue protein sequence, read N- to C-terminus: Kelch repeat protein C2 (512 aa).

Residues 2-67 (ESVIFSINGE…MRWKKINITI (66 aa)) form the BTB domain. Kelch repeat units follow at residues 216-261 (IKHN…LHNC), 262-307 (LYII…VNDG), 309-354 (LYVI…FVND), 356-403 (IYVM…EYDG), 405-449 (IYVI…SCGD), and 452-498 (LIIA…THKS).

Belongs to the poxviruses Kelch family.

In Vaccinia virus (strain Copenhagen) (VACV), this protein is Kelch repeat protein C2.